A 270-amino-acid chain; its full sequence is tRNA (guanine-N(1)-)-methyltransferase (270 aa).

S-adenosyl-L-methionine is bound by residues glycine 117 and 137-142 (IGDYVL).

This sequence belongs to the RNA methyltransferase TrmD family. In terms of assembly, homodimer.

It localises to the cytoplasm. It carries out the reaction guanosine(37) in tRNA + S-adenosyl-L-methionine = N(1)-methylguanosine(37) in tRNA + S-adenosyl-L-homocysteine + H(+). Functionally, specifically methylates guanosine-37 in various tRNAs. This chain is tRNA (guanine-N(1)-)-methyltransferase, found in Heliobacterium modesticaldum (strain ATCC 51547 / Ice1).